A 252-amino-acid polypeptide reads, in one-letter code: tRNA (guanine-N(1)-)-methyltransferase (252 aa).

S-adenosyl-L-methionine is bound by residues Gly113 and 133–138; that span reads IGDYVL.

It belongs to the RNA methyltransferase TrmD family. In terms of assembly, homodimer.

The protein localises to the cytoplasm. It catalyses the reaction guanosine(37) in tRNA + S-adenosyl-L-methionine = N(1)-methylguanosine(37) in tRNA + S-adenosyl-L-homocysteine + H(+). In terms of biological role, specifically methylates guanosine-37 in various tRNAs. This Xanthomonas campestris pv. campestris (strain 8004) protein is tRNA (guanine-N(1)-)-methyltransferase.